We begin with the raw amino-acid sequence, 253 residues long: Triosephosphate isomerase (253 aa).

Substrate is bound at residue 9 to 11; sequence NWK. His96 functions as the Electrophile in the catalytic mechanism. The active-site Proton acceptor is Glu169. Substrate is bound by residues Gly175, Ser215, and 236–237; that span reads GG.

The protein belongs to the triosephosphate isomerase family. In terms of assembly, homodimer.

Its subcellular location is the cytoplasm. The enzyme catalyses D-glyceraldehyde 3-phosphate = dihydroxyacetone phosphate. Its pathway is carbohydrate biosynthesis; gluconeogenesis. It functions in the pathway carbohydrate degradation; glycolysis; D-glyceraldehyde 3-phosphate from glycerone phosphate: step 1/1. In terms of biological role, involved in the gluconeogenesis. Catalyzes stereospecifically the conversion of dihydroxyacetone phosphate (DHAP) to D-glyceraldehyde-3-phosphate (G3P). In Borrelia garinii subsp. bavariensis (strain ATCC BAA-2496 / DSM 23469 / PBi) (Borreliella bavariensis), this protein is Triosephosphate isomerase.